The following is a 495-amino-acid chain: MASCHTAGHRTGLSSRSLYSLGGNQHTSYNVAGGSARGTRHSFGYGYGGGRGSGFANSMFGSMALGANCPSVCLSGGIYQVTVNKSLLAPLNVELDPEIQKVRAQEREQIKALNDKFASFIDKVRFLEQQNQVLQTKWELLQQLDLSNCRRNLEPVYEAHISNLRKQLEMLSGERVRLDPDLRKMRDVVEDYKKRYEVEITQRTAAENEFVLLKKDADAAYTVKVELQDKVDSLDKDIKFLKCLYDEEISQLQTHASETSVILSMDNNRDLDLAGIIAEVRAHYEDIALKSKAEAEMLYQTKIQELQLAAGCYGDSLKHIRSEMLELDRLIQRIRCDIANVKKQCSNLEMAIADAEQRGDSALKDAWAKLDELEGALQQAKEELARMLCEYQELMGLKLSLDVEIATYRKLLEGEENRMSGENPSSVSVSVISSSCGSCGYHPSSMISDSEAGNAVGSPSTPRNSQSKTRGSSVDPRDAQDESAAAAGTLARKTT.

A head region spans residues 1-105; sequence MASCHTAGHR…DPEIQKVRAQ (105 aa). A coil 1A region spans residues 106–141; the sequence is EREQIKALNDKFASFIDKVRFLEQQNQVLQTKWELL. The IF rod domain maps to 106-419; the sequence is EREQIKALND…KLLEGEENRM (314 aa). Residues 142 to 160 are linker 1; it reads QQLDLSNCRRNLEPVYEAH. Positions 161 to 252 are coil 1B; sequence ISNLRKQLEM…CLYDEEISQL (92 aa). A linker 12 region spans residues 253–276; the sequence is QTHASETSVILSMDNNRDLDLAGI. Residues 277-415 form a coil 2 region; it reads IAEVRAHYED…ATYRKLLEGE (139 aa). Positions 416-495 are tail; the sequence is ENRMSGENPS…AAGTLARKTT (80 aa). The disordered stretch occupies residues 449–495; the sequence is DSEAGNAVGSPSTPRNSQSKTRGSSVDPRDAQDESAAAAGTLARKTT. Positions 457 to 472 are enriched in polar residues; that stretch reads GSPSTPRNSQSKTRGS.

It belongs to the intermediate filament family. Heterotetramer of two type I and two type II keratins. Expressed in epidermis with a particularly strong staining in the nail matrix, nail bed and hyponychium (at protein level).

Functionally, has a role in hair formation. Specific component of keratin intermediate filaments in the inner root sheath (IRS) of the hair follicle. This is Keratin, type II cytoskeletal 74 from Mus musculus (Mouse).